The following is a 259-amino-acid chain: 3-oxo-5-alpha-steroid 4-dehydrogenase 1 (259 aa).

Helical transmembrane passes span 12 to 29 (LLAA…AVFA), 86 to 106 (ILLA…PFLM), 111 to 131 (PMPL…GYLQ), 151 to 171 (FLIG…SDHI), and 209 to 229 (YALA…FCFL).

The protein belongs to the steroid 5-alpha reductase family. As to expression, liver and prostate (at a low level).

It localises to the microsome membrane. It is found in the endoplasmic reticulum membrane. The catalysed reaction is a 3-oxo-5alpha-steroid + NADP(+) = a 3-oxo-Delta(4)-steroid + NADPH + H(+). It catalyses the reaction androst-4-ene-3,17-dione + NADPH + H(+) = 5alpha-androstan-3,17-dione + NADP(+). The enzyme catalyses 5alpha-pregnane-3,20-dione + NADP(+) = progesterone + NADPH + H(+). It carries out the reaction 17beta-hydroxy-5alpha-androstan-3-one + NADP(+) = testosterone + NADPH + H(+). Its function is as follows. Converts testosterone into 5-alpha-dihydrotestosterone and progesterone or corticosterone into their corresponding 5-alpha-3-oxosteroids. It plays a central role in sexual differentiation and androgen physiology. In Homo sapiens (Human), this protein is 3-oxo-5-alpha-steroid 4-dehydrogenase 1.